Here is a 453-residue protein sequence, read N- to C-terminus: BPI fold-containing family B member 6 (453 aa).

An N-terminal signal peptide occupies residues 1–18 (MLRILCLALCSLLTGTRA). An N-linked (GlcNAc...) asparagine glycan is attached at asparagine 114. A disulfide bridge links cysteine 137 with cysteine 174. Asparagine 190 carries an N-linked (GlcNAc...) asparagine glycan.

This sequence belongs to the BPI/LBP/Plunc superfamily. BPI/LBP family. In terms of tissue distribution, detected at very low levels in normal tonsils, and at higher levels in hypertrophic tonsils.

The protein resides in the secreted. This is BPI fold-containing family B member 6 (BPIFB6) from Homo sapiens (Human).